The primary structure comprises 357 residues: Type II methyltransferase M1.HgaI (357 aa).

Positions 5–357 (IMGLSLFSSA…NITREIFNEN (353 aa)) constitute an SAM-dependent MTase C5-type domain. Residue C83 is part of the active site.

Belongs to the class I-like SAM-binding methyltransferase superfamily. C5-methyltransferase family.

It carries out the reaction a 2'-deoxycytidine in DNA + S-adenosyl-L-methionine = a 5-methyl-2'-deoxycytidine in DNA + S-adenosyl-L-homocysteine + H(+). Its function is as follows. A methylase that recognizes DNA with the sequence 5'-GCGTC-3', methylates C-2, and protects the DNA from cleavage by the HgaI endonuclease. In Avibacterium volantium (Pasteurella volantium), this protein is Type II methyltransferase M1.HgaI (hgaIAM).